A 119-amino-acid polypeptide reads, in one-letter code: Holo-[acyl-carrier-protein] synthase (119 aa).

Residues D8 and E60 each coordinate Mg(2+).

Belongs to the P-Pant transferase superfamily. AcpS family. The cofactor is Mg(2+).

It is found in the cytoplasm. The catalysed reaction is apo-[ACP] + CoA = holo-[ACP] + adenosine 3',5'-bisphosphate + H(+). Its function is as follows. Transfers the 4'-phosphopantetheine moiety from coenzyme A to a Ser of acyl-carrier-protein. This chain is Holo-[acyl-carrier-protein] synthase, found in Mycoplasma pneumoniae (strain ATCC 29342 / M129 / Subtype 1) (Mycoplasmoides pneumoniae).